A 534-amino-acid polypeptide reads, in one-letter code: Prolyl 4-hydroxylase subunit alpha-1 (534 aa).

The signal sequence occupies residues 1-17 (MIWVVLMMAILLPQSLA). Residue Asn113 is glycosylated (N-linked (GlcNAc...) asparagine). Residues 205–238 (VSVLDYLSYAVYQQGDLDKALLLTKKLLELDPEH) form a TPR repeat. Residue Asn259 is glycosylated (N-linked (GlcNAc...) asparagine). Residues 411-519 (TAEELQVANY…KWVSNKWLHE (109 aa)) form the Fe2OG dioxygenase domain. Positions 429, 431, and 500 each coordinate Fe cation. Residue Lys510 participates in 2-oxoglutarate binding.

The protein belongs to the P4HA family. Heterotetramer of two alpha-1 chains and two beta chains (P4HB)(the beta chain is the multi-functional PDI), where P4HB plays the role of a structural subunit; this tetramer catalyzes the formation of 4-hydroxyproline in collagen. Requires Fe(2+) as cofactor. L-ascorbate is required as a cofactor. As to expression, expressed at least in brain, heart and lung.

Its subcellular location is the endoplasmic reticulum lumen. The catalysed reaction is L-prolyl-[collagen] + 2-oxoglutarate + O2 = trans-4-hydroxy-L-prolyl-[collagen] + succinate + CO2. Inhibited by poly(L-proline). Functionally, catalyzes the post-translational formation of 4-hydroxyproline in -Xaa-Pro-Gly- sequences in collagens and other proteins. This is Prolyl 4-hydroxylase subunit alpha-1 (P4ha1) from Mus musculus (Mouse).